Consider the following 144-residue polypeptide: Oleosin H2 (144 aa).

The residue at position 2 (alanine 2) is an N-acetylalanine. 3 helical membrane passes run 28–48 (VLAV…AGLI), 53–73 (IIGL…LVPA), and 75–95 (LTIA…ITAL). The short motif at 61–72 (PLFVIFSPILVP) is the Proline-knot element. The segment at 124–144 (QETVGQKTREAGQRSQDVIRP) is disordered.

Belongs to the oleosin family. As to expression, expressed in seeds (at protein level).

Its subcellular location is the lipid droplet. It localises to the membrane. In terms of biological role, may have a structural role to stabilize the lipid body during desiccation of the seed by preventing coalescence of the oil. Probably interacts with both lipid and phospholipid moieties of lipid bodies. May also provide recognition signals for specific lipase anchorage in lipolysis during seedling growth. This Sesamum indicum (Oriental sesame) protein is Oleosin H2.